Reading from the N-terminus, the 186-residue chain is Golgi apparatus membrane protein-like protein ECHIDNA (186 aa).

M1 bears the N-acetylmethionine mark. A run of 3 helical transmembrane segments spans residues 35–55, 108–128, and 132–152; these read ILSA…VLLA, FWWT…FSLI, and ADYL…IIGF.

The protein belongs to the TVP23 family. Component of a trans-Golgi network (TGN)-localized ECH/YIP4 complex made of ECH, YIP4A and YIP4B. Interacts directly with YIP4A and YIP4B.

Its subcellular location is the golgi apparatus. The protein resides in the trans-Golgi network membrane. It localises to the early endosome membrane. Its function is as follows. Mediates trans-Golgi-network trafficking and cell elongation. Required for keeping the appropriate balance between secretory trafficking and vacuolar targeting of a subset of proteins. The ECH/YIP4 complex is involved in the modulation of the trans-Golgi network (TGN)-mediated trafficking of some proteins and cell wall components (e.g. pectin and hemicellulose) to the cell wall in dark-grown hypocotyls and in secretory cells of the seed coat. The polypeptide is Golgi apparatus membrane protein-like protein ECHIDNA (Arabidopsis thaliana (Mouse-ear cress)).